Reading from the N-terminus, the 486-residue chain is Aspartyl/glutamyl-tRNA(Asn/Gln) amidotransferase subunit B (486 aa).

The protein belongs to the GatB/GatE family. GatB subfamily. Heterotrimer of A, B and C subunits.

It catalyses the reaction L-glutamyl-tRNA(Gln) + L-glutamine + ATP + H2O = L-glutaminyl-tRNA(Gln) + L-glutamate + ADP + phosphate + H(+). The enzyme catalyses L-aspartyl-tRNA(Asn) + L-glutamine + ATP + H2O = L-asparaginyl-tRNA(Asn) + L-glutamate + ADP + phosphate + 2 H(+). In terms of biological role, allows the formation of correctly charged Asn-tRNA(Asn) or Gln-tRNA(Gln) through the transamidation of misacylated Asp-tRNA(Asn) or Glu-tRNA(Gln) in organisms which lack either or both of asparaginyl-tRNA or glutaminyl-tRNA synthetases. The reaction takes place in the presence of glutamine and ATP through an activated phospho-Asp-tRNA(Asn) or phospho-Glu-tRNA(Gln). This Leptospira interrogans serogroup Icterohaemorrhagiae serovar Lai (strain 56601) protein is Aspartyl/glutamyl-tRNA(Asn/Gln) amidotransferase subunit B.